The sequence spans 800 residues: Protein MEI2-like 5 (800 aa).

RRM domains are found at residues 168–241 (RTLF…FSIP) and 253–326 (GTLV…PSRP). Ser384 and Ser390 each carry phosphoserine. Disordered stretches follow at residues 470–489 (GSPNARSEPSSSSVWSTSST) and 776–800 (VVDEESKNMDLLDSQLSDDDGRERS). Over residues 471–488 (SPNARSEPSSSSVWSTSS) the composition is skewed to low complexity. Phosphoserine is present on residues Ser789 and Ser792.

In terms of biological role, probable RNA-binding protein that plays a role in meiosis and vegetative growth. The protein is Protein MEI2-like 5 (ML5) of Arabidopsis thaliana (Mouse-ear cress).